Here is a 262-residue protein sequence, read N- to C-terminus: Zinc import ATP-binding protein ZnuC (262 aa).

Residues 5 to 220 (VSLEQLCVEF…PSYIALFGNA (216 aa)) enclose the ABC transporter domain. Residue 37 to 44 (GPNGAGKS) participates in ATP binding. Residues 236 to 262 (HHDLSGSPVSGDATSCSNHNHGHHHHD) are disordered.

Belongs to the ABC transporter superfamily. Zinc importer (TC 3.A.1.15.5) family. The complex is composed of two ATP-binding proteins (ZnuC), two transmembrane proteins (ZnuB) and a solute-binding protein (ZnuA).

It is found in the cell inner membrane. It catalyses the reaction Zn(2+)(out) + ATP(in) + H2O(in) = Zn(2+)(in) + ADP(in) + phosphate(in) + H(+)(in). Part of the ABC transporter complex ZnuABC involved in zinc import. Responsible for energy coupling to the transport system. The protein is Zinc import ATP-binding protein ZnuC of Vibrio parahaemolyticus serotype O3:K6 (strain RIMD 2210633).